Here is a 502-residue protein sequence, read N- to C-terminus: Probable RNA exonuclease C9B6.11c (502 aa).

The segment at 338 to 379 is disordered; that stretch reads SELEEKNASTKTENDSNEDDKEECQSSSTSSVPESTASTPKK. Residues 341–351 are compositionally biased toward basic and acidic residues; the sequence is EEKNASTKTEN. Residues 363–376 are compositionally biased toward low complexity; the sequence is SSSTSSVPESTAST.

It belongs to the CCR4/nocturin family.

It localises to the cytoplasm. The protein resides in the nucleus. In Schizosaccharomyces pombe (strain 972 / ATCC 24843) (Fission yeast), this protein is Probable RNA exonuclease C9B6.11c.